We begin with the raw amino-acid sequence, 202 residues long: tRNA (pseudouridine(54)-N(1))-methyltransferase (202 aa).

S-adenosyl-L-methionine-binding residues include L134 and G155.

This sequence belongs to the methyltransferase superfamily. TrmY family. Homodimer.

It localises to the cytoplasm. The enzyme catalyses pseudouridine(54) in tRNA + S-adenosyl-L-methionine = N(1)-methylpseudouridine(54) in tRNA + S-adenosyl-L-homocysteine + H(+). Its function is as follows. Specifically catalyzes the N1-methylation of pseudouridine at position 54 (Psi54) in tRNAs. The sequence is that of tRNA (pseudouridine(54)-N(1))-methyltransferase from Thermococcus gammatolerans (strain DSM 15229 / JCM 11827 / EJ3).